The sequence spans 95 residues: Aspartyl/glutamyl-tRNA(Asn/Gln) amidotransferase subunit C (95 aa).

Belongs to the GatC family. Heterotrimer of A, B and C subunits.

The enzyme catalyses L-glutamyl-tRNA(Gln) + L-glutamine + ATP + H2O = L-glutaminyl-tRNA(Gln) + L-glutamate + ADP + phosphate + H(+). It catalyses the reaction L-aspartyl-tRNA(Asn) + L-glutamine + ATP + H2O = L-asparaginyl-tRNA(Asn) + L-glutamate + ADP + phosphate + 2 H(+). Functionally, allows the formation of correctly charged Asn-tRNA(Asn) or Gln-tRNA(Gln) through the transamidation of misacylated Asp-tRNA(Asn) or Glu-tRNA(Gln) in organisms which lack either or both of asparaginyl-tRNA or glutaminyl-tRNA synthetases. The reaction takes place in the presence of glutamine and ATP through an activated phospho-Asp-tRNA(Asn) or phospho-Glu-tRNA(Gln). This is Aspartyl/glutamyl-tRNA(Asn/Gln) amidotransferase subunit C from Rhizobium rhizogenes (strain K84 / ATCC BAA-868) (Agrobacterium radiobacter).